The chain runs to 94 residues: Small ribosomal subunit protein uS19 (94 aa).

This sequence belongs to the universal ribosomal protein uS19 family.

In terms of biological role, protein S19 forms a complex with S13 that binds strongly to the 16S ribosomal RNA. The sequence is that of Small ribosomal subunit protein uS19 from Acidobacterium capsulatum (strain ATCC 51196 / DSM 11244 / BCRC 80197 / JCM 7670 / NBRC 15755 / NCIMB 13165 / 161).